The chain runs to 337 residues: 4-hydroxyproline 2-epimerase (337 aa).

The Proton acceptor role is filled by Cys-91. Residues Gly-92–His-93, Asp-252, and Gly-257–Thr-258 each bind substrate.

It belongs to the proline racemase family.

The catalysed reaction is trans-4-hydroxy-L-proline = cis-4-hydroxy-D-proline. Functionally, catalyzes the epimerization of trans-4-hydroxy-L-proline (t4LHyp) to cis-4-hydroxy-D-proline (c4DHyp). Is involved in a degradation pathway that converts t4LHyp to alpha-ketoglutarate, which allows R.sphaeroides to grow on t4LHyp as a sole carbon source. Displays no proline racemase activity. This is 4-hydroxyproline 2-epimerase from Cereibacter sphaeroides (strain ATCC 17023 / DSM 158 / JCM 6121 / CCUG 31486 / LMG 2827 / NBRC 12203 / NCIMB 8253 / ATH 2.4.1.) (Rhodobacter sphaeroides).